The following is a 742-amino-acid chain: Clamp-binding protein CrfC (742 aa).

The interval 41–45 is clamp-binding consensus; that stretch reads QLALP. The 337-residue stretch at 66–402 folds into the Dynamin-type G domain; it reads SRLEMVLAIV…LWEDSLFAQP (337 aa). The interval 76-83 is G1 motif; the sequence is GTMKAGKS. The interval 102–104 is G2 motif; it reads MTA. Residues 236-239 form a G3 motif region; it reads DTPG. The segment at 297 to 300 is G4 motif; it reads NKFD. Positions 331-334 are G5 motif; the sequence is FPVS. A coiled-coil region spans residues 440-472; the sequence is RAHGLNVACEQLRQNIHQVEESLQLLQLNQAQV.

Belongs to the TRAFAC class dynamin-like GTPase superfamily. Dynamin/Fzo/YdjA family. As to quaternary structure, forms homooligomers. Binds to the beta sliding clamp processivity factor (DnaN) in the presence and absence of DNA, may bind to the clamp itself as homodimers or trimers. Homooligomers may be able to bind more than 1 clamp complex.

The protein resides in the cytoplasm. Its function is as follows. Important for the colocalization of sister nascent DNA strands after replication fork passage during DNA replication, and for positioning and subsequent partitioning of sister chromosomes. Does not have GTPase activity on its own. The sequence is that of Clamp-binding protein CrfC (crfC) from Escherichia coli.